The following is a 252-amino-acid chain: Phosphoglycolate phosphatase (252 aa).

Aspartate 13 functions as the Nucleophile in the catalytic mechanism. The Mg(2+) site is built by aspartate 13, aspartate 15, and aspartate 192.

Belongs to the HAD-like hydrolase superfamily. CbbY/CbbZ/Gph/YieH family. In terms of assembly, monomer. It depends on Mg(2+) as a cofactor. The cofactor is chloride.

It catalyses the reaction 2-phosphoglycolate + H2O = glycolate + phosphate. It participates in organic acid metabolism; glycolate biosynthesis; glycolate from 2-phosphoglycolate: step 1/1. In terms of biological role, specifically catalyzes the dephosphorylation of 2-phosphoglycolate. Is involved in the dissimilation of the intracellular 2-phosphoglycolate formed during the DNA repair of 3'-phosphoglycolate ends, a major class of DNA lesions induced by oxidative stress. The sequence is that of Phosphoglycolate phosphatase from Salmonella choleraesuis (strain SC-B67).